A 342-amino-acid polypeptide reads, in one-letter code: Isopentenyl-diphosphate delta-isomerase (342 aa).

6-7 (RK) is a substrate binding site. FMN is bound by residues S63, 64-66 (SMT), S94, and N122. Residue 94-96 (SMR) participates in substrate binding. Q157 contributes to the substrate binding site. E158 is a Mg(2+) binding site. Residues K189, T219, 269-271 (GLK), and 290-291 (AG) contribute to the FMN site.

The protein belongs to the IPP isomerase type 2 family. As to quaternary structure, homooctamer. Dimer of tetramers. The cofactor is FMN. It depends on NADPH as a cofactor. Mg(2+) serves as cofactor.

The protein resides in the cytoplasm. It catalyses the reaction isopentenyl diphosphate = dimethylallyl diphosphate. Functionally, involved in the biosynthesis of isoprenoids. Catalyzes the 1,3-allylic rearrangement of the homoallylic substrate isopentenyl (IPP) to its allylic isomer, dimethylallyl diphosphate (DMAPP). The sequence is that of Isopentenyl-diphosphate delta-isomerase from Rickettsia bellii (strain RML369-C).